We begin with the raw amino-acid sequence, 354 residues long: 3-isopropylmalate dehydrogenase (354 aa).

76–87 (GPRWDGAKERPE) contacts NAD(+). Substrate contacts are provided by Arg-94, Arg-104, Arg-130, and Asp-215. Residues Asp-215, Asp-239, and Asp-243 each coordinate Mg(2+). 273 to 285 (GSAPDIAGKNKAN) is an NAD(+) binding site.

This sequence belongs to the isocitrate and isopropylmalate dehydrogenases family. LeuB type 1 subfamily. As to quaternary structure, homodimer. The cofactor is Mg(2+). It depends on Mn(2+) as a cofactor.

Its subcellular location is the cytoplasm. The enzyme catalyses (2R,3S)-3-isopropylmalate + NAD(+) = 4-methyl-2-oxopentanoate + CO2 + NADH. The protein operates within amino-acid biosynthesis; L-leucine biosynthesis; L-leucine from 3-methyl-2-oxobutanoate: step 3/4. Its function is as follows. Catalyzes the oxidation of 3-carboxy-2-hydroxy-4-methylpentanoate (3-isopropylmalate) to 3-carboxy-4-methyl-2-oxopentanoate. The product decarboxylates to 4-methyl-2 oxopentanoate. This Bacillus anthracis protein is 3-isopropylmalate dehydrogenase.